The sequence spans 221 residues: Chaperone protein TorD (221 aa).

The protein belongs to the TorD/DmsD family. TorD subfamily.

It localises to the cytoplasm. In terms of biological role, involved in the biogenesis of TorA. Acts on TorA before the insertion of the molybdenum cofactor and, as a result, probably favors a conformation of the apoenzyme that is competent for acquiring the cofactor. The protein is Chaperone protein TorD of Shewanella pealeana (strain ATCC 700345 / ANG-SQ1).